A 219-amino-acid polypeptide reads, in one-letter code: Thymidylate kinase (219 aa).

9–16 (GIEGSGKT) is an ATP binding site.

This sequence belongs to the thymidylate kinase family.

The catalysed reaction is dTMP + ATP = dTDP + ADP. In terms of biological role, phosphorylation of dTMP to form dTDP in both de novo and salvage pathways of dTTP synthesis. In Pelobacter propionicus (strain DSM 2379 / NBRC 103807 / OttBd1), this protein is Thymidylate kinase.